Consider the following 196-residue polypeptide: uncharacterized protein (196 aa).

2 consecutive CBS domains span residues 10–69 (ARRD…NPDE) and 76–132 (MSQP…LVAT). The ACP-type MB domain maps to 153–187 (IIEGVCDLCETYSEELRFVDGVWVCPECYEDILGR). Fe cation is bound by residues C158, C161, C177, and C180. Residues C158, C161, C177, and C180 each contribute to the Zn(2+) site.

This is an uncharacterized protein from Methanopyrus kandleri (strain AV19 / DSM 6324 / JCM 9639 / NBRC 100938).